The primary structure comprises 95 residues: Small ribosomal subunit protein bS6 (95 aa).

This sequence belongs to the bacterial ribosomal protein bS6 family.

Binds together with bS18 to 16S ribosomal RNA. The sequence is that of Small ribosomal subunit protein bS6 from Corynebacterium diphtheriae (strain ATCC 700971 / NCTC 13129 / Biotype gravis).